We begin with the raw amino-acid sequence, 782 residues long: General transcription and DNA repair factor IIH helicase/translocase subunit XPB (782 aa).

A compositionally biased stretch (basic and acidic residues) spans 1-11 (MGKRDRVDRDK). The segment at 1–52 (MGKRDRVDRDKKKSKKRQYEEEEEDEDDAPGNESQEAVPSAAGKQVDESSTK) is disordered. Positions 6–18 (RVDRDKKKSKKRQ) match the Nuclear localization signal motif. The span at 20 to 30 (EEEEEDEDDAP) shows a compositional bias: acidic residues. At Ser-34 the chain carries Phosphoserine. Residues 328–489 (FGNGRARSGV…LNFLIGPKLY (162 aa)) enclose the Helicase ATP-binding domain. Residue 341-348 (PCGAGKSL) coordinates ATP. The short motif at 442–445 (EVHT) is the DEVH box element. The Helicase C-terminal domain maps to 543-703 (ACQFLIKFHE…AGMEEEELAF (161 aa)). Ser-686 carries the phosphoserine modification. Ser-751 bears the Phosphoserine; by CK2 mark.

The protein belongs to the helicase family. RAD25/XPB subfamily. Component of the 7-subunit TFIIH core complex composed of XPB/ERCC3, XPD/ERCC2, GTF2H1, GTF2H2, GTF2H3, GTF2H4 and GTF2H5, which is active in NER. The core complex associates with the 3-subunit CDK-activating kinase (CAK) module composed of CCNH/cyclin H, CDK7 and MNAT1 to form the 10-subunit holoenzyme (holo-TFIIH) active in transcription. Interacts with PUF60. Interacts with ATF7IP. Interacts with KAT2A; leading to KAT2A recruitment to promoters and acetylation of histones. Part of TBP-based Pol II pre-initiation complex (PIC), in which Pol II core assembles with general transcription factors and other specific initiation factors including GTF2E1, GTF2E2, GTF2F1, GTF2F2, TCEA1, ERCC2, ERCC3, GTF2H2, GTF2H3, GTF2H4, GTF2H5, GTF2A1, GTF2A2, GTF2B and TBP; this large multi-subunit PIC complex mediates DNA unwinding and targets Pol II core to the transcription start site where the first phosphodiester bond forms. Post-translationally, phosphorylation on Ser-751 by CK2 controls the 5'-excision activity of ERCC1-XPF endonuclease; phosphorylated protein inhibits the excision activity and thus NER. Dephosphorylation reactivates the 5'-excision step. Phosphorylation has no effect on transcription or the 3'-5' helicase activity.

The protein localises to the nucleus. It catalyses the reaction Couples ATP hydrolysis with the unwinding of duplex DNA by translocating in the 3'-5' direction.. The catalysed reaction is ATP + H2O = ADP + phosphate + H(+). Phosphorylation on Ser-751 by CK2 controls the 5'-excision activity of ERCC1-XPF endonuclease; phosphorylated protein inhibits the excision activity and thus NER. ATPase activity is stimulated by TFIIH subunit p52 (GTF2H4). DNA translocase activity by this subunit in TFIIH is stimulated by XPA, ERCC5/XPG and XFP plus ERCC1. ATP-dependent 3'-5' DNA helicase/translocase; binds dsDNA rather than ssDNA, unzipping it in a translocase rather than classical helicase activity. Component of the general transcription and DNA repair factor IIH (TFIIH) core complex. When complexed to CDK-activating kinase (CAK), involved in RNA transcription by RNA polymerase II. The ATPase activity of XPB/ERCC3, but not its helicase activity, is required for DNA opening; it may wrap around the damaged DNA wedging it open, causing localized melting and twisting that allows XPD/ERCC2 helicase to anchor. The ATP-dependent helicase activity of XPB/ERCC3 may be required for promoter escape. Also involved in transcription-coupled nucleotide excision repair (NER) of damaged DNA. In NER, TFIIH acts by opening DNA around the lesion to allow the excision of the damaged oligonucleotide and its replacement by a new DNA fragment. The structure of the TFIIH transcription complex differs from the NER-TFIIH complex; large movements by XPD/ERCC2 and XPB/ERCC3 are stabilized by XPA. This is General transcription and DNA repair factor IIH helicase/translocase subunit XPB (Ercc3) from Rattus norvegicus (Rat).